Reading from the N-terminus, the 204-residue chain is N-(5'-phosphoribosyl)anthranilate isomerase (204 aa).

Belongs to the TrpF family.

It catalyses the reaction N-(5-phospho-beta-D-ribosyl)anthranilate = 1-(2-carboxyphenylamino)-1-deoxy-D-ribulose 5-phosphate. It functions in the pathway amino-acid biosynthesis; L-tryptophan biosynthesis; L-tryptophan from chorismate: step 3/5. The chain is N-(5'-phosphoribosyl)anthranilate isomerase from Bacillus cereus (strain ZK / E33L).